Here is a 194-residue protein sequence, read N- to C-terminus: Endoribonuclease YbeY (194 aa).

Residues His151, His155, and His161 each coordinate Zn(2+).

This sequence belongs to the endoribonuclease YbeY family. The cofactor is Zn(2+).

It is found in the cytoplasm. Its function is as follows. Single strand-specific metallo-endoribonuclease involved in late-stage 70S ribosome quality control and in maturation of the 3' terminus of the 16S rRNA. The chain is Endoribonuclease YbeY from Gloeobacter violaceus (strain ATCC 29082 / PCC 7421).